The primary structure comprises 347 residues: NADH-ubiquinone oxidoreductase chain 2 (347 aa).

11 helical membrane passes run 3-23 (PPIL…VLTS), 25-45 (HWML…PILM), 59-79 (YFLM…INLL), 96-116 (TLMT…FWVP), 122-142 (ISLS…LSVL), 153-173 (LLLL…LNQT), 178-198 (ILAY…IYNP), 200-220 (MMLL…MLFM), 237-257 (MPLI…LPPL), 274-294 (EMII…YFYM), and 325-345 (FLPP…IISI).

The protein belongs to the complex I subunit 2 family. As to quaternary structure, core subunit of respiratory chain NADH dehydrogenase (Complex I) which is composed of 45 different subunits. Interacts with TMEM242.

It is found in the mitochondrion inner membrane. It catalyses the reaction a ubiquinone + NADH + 5 H(+)(in) = a ubiquinol + NAD(+) + 4 H(+)(out). Core subunit of the mitochondrial membrane respiratory chain NADH dehydrogenase (Complex I) which catalyzes electron transfer from NADH through the respiratory chain, using ubiquinone as an electron acceptor. Essential for the catalytic activity and assembly of complex I. The polypeptide is NADH-ubiquinone oxidoreductase chain 2 (Paradoxurus hermaphroditus (Asian palm civet)).